Consider the following 655-residue polypeptide: E3 ubiquitin-protein ligase TRIM32 (655 aa).

Residues Cys21 to Ser66 form an RING-type zinc finger. Ser56 is modified (phosphoserine; by CHEK2). The B box-type; atypical zinc-finger motif lies at Val96 to Val139. Zn(2+) is bound by residues Cys101, Cys104, Cys124, and His129. Positions Val139 to Glu198 form a coiled coil. Residues Met327–Ser347 are disordered. Phosphoserine is present on residues Ser330, Ser337, and Ser341. NHL repeat units follow at residues Leu360 to Lys403, Asp417 to Asp460, Gly461 to Asp501, Gly564 to Gly607, and Gly608 to His648.

It belongs to the TRIM/RBCC family. It self-associates. Interacts with DTNBP1. Interacts with PIAS4/PIASY upon treatment with UVB and TNF-alpha. Interacts with AMBRA1; promoting activation of ULK1 through unanchored 'Lys-63'-linked polyubiquitin chains. Interacts with TICAM1 and TAX1BP1; these interactions target TICAM1 to TAX1BP1-mediated selective autophagic degradation. Ubiquitinated. In terms of processing, phosphorylation at Ser-56 by CHEK2 under oxidative stress, activates the E3 ligase activity and promotes ATG7 ubiquitination leading to positive regulation of the autophagosme assembly. As to expression, ubiquitous. High expression in brain.

The protein localises to the cytoplasm. The catalysed reaction is S-ubiquitinyl-[E2 ubiquitin-conjugating enzyme]-L-cysteine + [acceptor protein]-L-lysine = [E2 ubiquitin-conjugating enzyme]-L-cysteine + N(6)-ubiquitinyl-[acceptor protein]-L-lysine.. The protein operates within protein modification; protein ubiquitination. Functionally, E3 ubiquitin ligase that plays a role in various biological processes including neural stem cell differentiation, innate immunity, inflammatory resonse and autophagy. Plays a role in virus-triggered induction of IFN-beta and TNF-alpha by mediating the ubiquitination of STING1. Mechanistically, targets STING1 for 'Lys-63'-linked ubiquitination which promotes the interaction of STING1 with TBK1. Regulates bacterial clearance and promotes autophagy in Mycobacterium tuberculosis-infected macrophages. Negatively regulates TLR3/4-mediated innate immune and inflammatory response by triggering the autophagic degradation of TICAM1 in an E3 activity-independent manner. Plays an essential role in oxidative stress induced cell death by inducing loss of transmembrane potential and enhancing mitochondrial reactive oxygen species (ROS) production during oxidative stress conditions. Ubiquitinates XIAP and targets it for proteasomal degradation. Ubiquitinates DTNBP1 (dysbindin) and promotes its degradation. May ubiquitinate BBS2. Ubiquitinates PIAS4/PIASY and promotes its degradation in keratinocytes treated with UVB and TNF-alpha. Also acts as a regulator of autophagy by mediating formation of unanchored 'Lys-63'-linked polyubiquitin chains that activate ULK1: interaction with AMBRA1 is required for ULK1 activation. Positively regulates dendritic branching by promoting ubiquitination and subsequent degradation of the epigenetic factor CDYL. Under metabolic stress and phosphorylation by CHK2, mediates 'Lys-63'-linked ubiquitination of ATG7 at 'Lys-41' to initiate autophagy. This chain is E3 ubiquitin-protein ligase TRIM32, found in Mus musculus (Mouse).